Here is a 130-residue protein sequence, read N- to C-terminus: Small ribosomal subunit protein uS11 (130 aa).

It belongs to the universal ribosomal protein uS11 family. As to quaternary structure, part of the 30S ribosomal subunit. Interacts with proteins S7 and S18. Binds to IF-3.

In terms of biological role, located on the platform of the 30S subunit, it bridges several disparate RNA helices of the 16S rRNA. Forms part of the Shine-Dalgarno cleft in the 70S ribosome. The protein is Small ribosomal subunit protein uS11 of Alkalilimnicola ehrlichii (strain ATCC BAA-1101 / DSM 17681 / MLHE-1).